A 482-amino-acid polypeptide reads, in one-letter code: Falcipain-2b (482 aa).

The Cytoplasmic portion of the chain corresponds to 1–35; it reads MDYHMDYIPNEVISHQGERFVDKYVDRKILKNKKS. Residues 1–241 constitute a propeptide, activation peptide; that stretch reads MDYHMDYIPN…PLKNSKYLLD (241 aa). Positions 16–25 match the Bipartite vacuolar targeting signal 1 motif; the sequence is QGERFVDKYV. A helical; Signal-anchor for type II membrane protein membrane pass occupies residues 36–56; sequence LLVIISLSVLSVVGFILFYFT. Topologically, residues 57-482 are lumenal; it reads PNFRKSDLFK…GTDAFIPLIE (426 aa). The N-linked (GlcNAc...) asparagine glycan is linked to Asn-67. Residues 84–105 carry the Bipartite vacuolar targeting signal 2 motif; that stretch reads KSPNGKKFIVSKIDEALSFYDN. The N-linked (GlcNAc...) asparagine glycan is linked to Asn-117. The Nose motif; required for the correct folding of the mature form motif lies at 242-258; that stretch reads QINYDAVIKKYKGNENF. 4 disulfide bridges follow: Cys-280/Cys-321, Cys-314/Cys-355, Cys-340/Cys-360, and Cys-409/Cys-470. Cys-283 is a catalytic residue. His-415 is an active-site residue. The Arm motif; binds to host hemoglobin and required for the inhibitory interaction between the propeptide and the catalytic domain signature appears at 426–435; that stretch reads EIVNPLTKKG.

This sequence belongs to the peptidase C1 family. Component of the hemozoin formation complex (HFC) composed of falcipains FP2A and/or FP2B, plasmepsins PMII, PMIII/HAP and PMIV, heme detoxifying protein HDP and falcilysin FLN. The HFC complex is involved in hemoglobin degradation and detoxification of heme in the food vacuole during the asexual blood stage.

Its subcellular location is the vacuole. The protein localises to the membrane. Its function is as follows. Cysteine protease which cleaves native host hemoglobin in the food vacuole during the asexual blood stage. Preferentially cleaves substrates which have a leucine at the P2 position. The sequence is that of Falcipain-2b from Plasmodium falciparum (isolate 3D7).